Reading from the N-terminus, the 241-residue chain is Small ribosomal subunit protein uS2 (241 aa).

The protein belongs to the universal ribosomal protein uS2 family.

This chain is Small ribosomal subunit protein uS2, found in Proteus mirabilis (strain HI4320).